The sequence spans 219 residues: Adenylate kinase (219 aa).

10–15 provides a ligand contact to ATP; sequence GAGKGT. The interval 30–59 is NMP; the sequence is STGDMLRAAVKAGTPLGQQAKKIMDEGGLV. AMP is bound by residues Thr31, Arg36, 57 to 59, 85 to 88, and Gln92; these read GLV and GFPR. Positions 122-159 are LID; the sequence is GRRVHPGSGRVYHVTHNPPRQEGKDDVTGEDLVQREDD. Residues Arg123 and 132–133 each bind ATP; that span reads VY. Positions 128–150 are disordered; sequence GSGRVYHVTHNPPRQEGKDDVTG. Basic and acidic residues predominate over residues 140-150; the sequence is PRQEGKDDVTG. AMP is bound by residues Arg156 and Arg167. Position 203 (Arg203) interacts with ATP.

It belongs to the adenylate kinase family. As to quaternary structure, monomer.

It is found in the cytoplasm. It carries out the reaction AMP + ATP = 2 ADP. It participates in purine metabolism; AMP biosynthesis via salvage pathway; AMP from ADP: step 1/1. Catalyzes the reversible transfer of the terminal phosphate group between ATP and AMP. Plays an important role in cellular energy homeostasis and in adenine nucleotide metabolism. The sequence is that of Adenylate kinase from Halorhodospira halophila (strain DSM 244 / SL1) (Ectothiorhodospira halophila (strain DSM 244 / SL1)).